We begin with the raw amino-acid sequence, 780 residues long: ATP-dependent 6-phosphofructokinase, muscle type (780 aa).

T2 bears the N-acetylthreonine mark. Residues 2–390 (THEEHHAAKT…NWEVYKLLAH (389 aa)) form an N-terminal catalytic PFK domain 1 region. ATP-binding positions include G25, 88–89 (RC), and 118–121 (GDGS). D119 contacts Mg(2+). The residue at position 133 (S133) is a Phosphoserine. Residues 164-166 (SID), R201, 208-210 (MGR), E264, R292, and 298-301 (HVQR) each bind substrate. D166 functions as the Proton acceptor in the catalytic mechanism. Phosphoserine is present on S377. The interdomain linker stretch occupies residues 391 to 401 (IRPPVSKSGSH). The C-terminal regulatory PFK domain 2 stretch occupies residues 402-780 (TVAVMNVGAP…SRKRSGEAPA (379 aa)). Beta-D-fructose 2,6-bisphosphate contacts are provided by residues R471 and 528 to 532 (TVSNN). O-linked (GlcNAc) serine glycosylation is present at S530. K557 carries the N6-(2-hydroxyisobutyryl)lysine modification. Beta-D-fructose 2,6-bisphosphate-binding positions include R566, 573 to 575 (MGG), E629, R655, and 661 to 664 (HMQQ). S667 is subject to Phosphoserine. R735 serves as a coordination point for beta-D-fructose 2,6-bisphosphate. Position 775 is a phosphoserine (S775).

It belongs to the phosphofructokinase type A (PFKA) family. ATP-dependent PFK group I subfamily. Eukaryotic two domain clade 'E' sub-subfamily. In terms of assembly, homo- and heterotetramers. Phosphofructokinase (PFK) enzyme functions as a tetramer composed of different combinations of 3 types of subunits, called PFKM (M), PFKL (L) and PFKP (P). The composition of the PFK tetramer differs according to the tissue type it is present in. The kinetic and regulatory properties of the tetrameric enzyme are dependent on the subunit composition, hence can vary across tissues. Interacts (via C-terminus) with HK1 (via N-terminal spermatogenic cell-specific region). Mg(2+) serves as cofactor. GlcNAcylation decreases enzyme activity.

Its subcellular location is the cytoplasm. The enzyme catalyses beta-D-fructose 6-phosphate + ATP = beta-D-fructose 1,6-bisphosphate + ADP + H(+). The protein operates within carbohydrate degradation; glycolysis; D-glyceraldehyde 3-phosphate and glycerone phosphate from D-glucose: step 3/4. Allosterically activated by ADP, AMP, or fructose 2,6-bisphosphate, and allosterically inhibited by ATP or citrate. Functionally, catalyzes the phosphorylation of D-fructose 6-phosphate to fructose 1,6-bisphosphate by ATP, the first committing step of glycolysis. This is ATP-dependent 6-phosphofructokinase, muscle type (PFKM) from Equus caballus (Horse).